The following is a 345-amino-acid chain: Dihydroorotate dehydrogenase (quinone) (345 aa).

FMN is bound by residues 65–69 (AGLDK) and Thr-89. Lys-69 serves as a coordination point for substrate. Residue 114–118 (NRMGF) participates in substrate binding. 2 residues coordinate FMN: Asn-146 and Asn-179. Asn-179 contributes to the substrate binding site. The Nucleophile role is filled by Ser-182. Residue Asn-184 coordinates substrate. Positions 224 and 252 each coordinate FMN. Residue 253 to 254 (NT) participates in substrate binding. Residues Gly-275, Gly-304, and 325–326 (YT) contribute to the FMN site.

Belongs to the dihydroorotate dehydrogenase family. Type 2 subfamily. As to quaternary structure, monomer. It depends on FMN as a cofactor.

It localises to the cell membrane. It catalyses the reaction (S)-dihydroorotate + a quinone = orotate + a quinol. Its pathway is pyrimidine metabolism; UMP biosynthesis via de novo pathway; orotate from (S)-dihydroorotate (quinone route): step 1/1. Functionally, catalyzes the conversion of dihydroorotate to orotate with quinone as electron acceptor. This Janthinobacterium sp. (strain Marseille) (Minibacterium massiliensis) protein is Dihydroorotate dehydrogenase (quinone).